Reading from the N-terminus, the 518-residue chain is Sensor protein kinase HptS (518 aa).

2 helical membrane passes run 20-40 and 222-242; these read IFPVFLVIIIGLVSFYAIYIW and GITLLIVMAVVLVLLVIFGFI. The Histidine kinase domain maps to 297–513; that stretch reads EQLIHSIEHT…LICYKIPLSR (217 aa). The residue at position 325 (His-325) is a Phosphohistidine; by autocatalysis.

Post-translationally, autophosphorylated.

It is found in the cell membrane. It carries out the reaction ATP + protein L-histidine = ADP + protein N-phospho-L-histidine.. In terms of biological role, member of the two-component regulatory system HptS/HptR that regulates genes involved in hexose phosphate transport system in response to changes in extracellular phosphate sources. May act as a sensor protein kinase which is autophosphorylated at a histidine residue and transfers its phosphate group to the conserved aspartic acid residue in the regulatory domain of HptS. In turn, HptS antagonizes CcpA-dependent transcription of a subset of CcpA-regulated genes involved in antibiotic susceptibility. The chain is Sensor protein kinase HptS (hptS) from Staphylococcus aureus (strain MRSA252).